We begin with the raw amino-acid sequence, 166 residues long: UPF0304 protein VS_1049 (166 aa).

This sequence belongs to the UPF0304 family.

In Vibrio atlanticus (strain LGP32) (Vibrio splendidus (strain Mel32)), this protein is UPF0304 protein VS_1049.